The chain runs to 247 residues: Caffeoyl-CoA O-methyltransferase 2 (247 aa).

Residue Lys-21 coordinates substrate. S-adenosyl-L-methionine is bound by residues Thr-63, Glu-85, 87–88, Ser-93, Asp-111, and Ala-140; that span reads GV. Asp-163 lines the substrate pocket. Residue Asp-163 participates in a divalent metal cation binding. An S-adenosyl-L-methionine-binding site is contributed by Asp-165. Residues Asp-189 and Asn-190 each coordinate a divalent metal cation. Asn-194 serves as a coordination point for substrate.

This sequence belongs to the class I-like SAM-binding methyltransferase superfamily. Cation-dependent O-methyltransferase family. CCoAMT subfamily. A divalent metal cation is required as a cofactor.

It catalyses the reaction (E)-caffeoyl-CoA + S-adenosyl-L-methionine = (E)-feruloyl-CoA + S-adenosyl-L-homocysteine + H(+). The protein operates within aromatic compound metabolism; phenylpropanoid biosynthesis. Methylates caffeoyl-CoA to feruloyl-CoA and 5-hydroxyferuloyl-CoA to sinapoyl-CoA. Plays a role in the synthesis of feruloylated polysaccharides. Involved in the reinforcement of the plant cell wall. Also involved in the responding to wounding or pathogen challenge by the increased formation of cell wall-bound ferulic acid polymers. This is Caffeoyl-CoA O-methyltransferase 2 (CCOAOMT2) from Populus trichocarpa (Western balsam poplar).